The following is a 162-amino-acid chain: Interleukin-15 (162 aa).

A signal peptide spans 1 to 29 (MRILKPHLRSTSIQCYLCLLLNSHFLTEA). A propeptide spanning residues 30–48 (GIHVFILGCISAGLPKTEA) is cleaved from the precursor. 2 disulfides stabilise this stretch: Cys-83–Cys-133 and Cys-90–Cys-136. Asn-108 is a glycosylation site (N-linked (GlcNAc...) asparagine).

The protein belongs to the IL-15/IL-21 family.

It is found in the secreted. Its function is as follows. Cytokine that plays a major role in the development of inflammatory and protective immune responses to microbial invaders and parasites by modulating immune cells of both the innate and adaptive immune systems. Stimulates the proliferation of natural killer cells, T-cells and B-cells and promotes the secretion of several cytokines. In monocytes, induces the production of IL8 and monocyte chemotactic protein 1/CCL2, two chemokines that attract neutrophils and monocytes respectively to sites of infection. Unlike most cytokines, which are secreted in soluble form, IL15 is expressed in association with its high affinity IL15RA on the surface of IL15-producing cells and delivers signals to target cells that express IL2RB and IL2RG receptor subunits. Binding to its receptor triggers the phosphorylation of JAK1 and JAK3 and the recruitment and subsequent phosphorylation of signal transducer and activator of transcription-3/STAT3 and STAT5. In mast cells, induces the rapid tyrosine phosphorylation of STAT6 and thereby controls mast cell survival and release of cytokines such as IL4. In Ailuropoda melanoleuca (Giant panda), this protein is Interleukin-15 (IL15).